The primary structure comprises 285 residues: Dioxygenase andF (285 aa).

The Fe cation site is built by His128, Asp130, and His205.

It belongs to the PhyH family. Homodimer. Fe cation serves as cofactor.

It participates in secondary metabolite biosynthesis; terpenoid biosynthesis. In terms of biological role, dioxygenase; part of the gene cluster that mediates the biosynthesis of anditomin, a fungal meroterpenoid. The first step of the pathway is the synthesis of 3,5-dimethylorsellinic acid (DMOA) by the polyketide synthase andM. DMOA is then converted to the phthalide compound 5,7-dihydroxy-4,6-dimethylphthalide (DHDMP) by the cytochrome P450 monooxygenase andK, which is further prenylated by the prenyltransferase andD to yield farnesyl-DHDMP. Further epoxidation by the FAD-dependent monooxygenase andE leads to epoxyfarnesyl-DHDMP. The next step involves the terpene cyclase andB that converts epoxyfarnesyl-DHDMP into preandiloid A through opening of the epoxide ring followed by the cyclization of the farnesyl moiety. Preandiloid A is in turn oxidized at the C-3 hydroxyl group to yield preandiloid B by the dehydrogenase andC. The dioxygenase andA is solely responsible for the dehydrogenation of preandiloid B leading to the enone preandiloid C, as well as for the intriguing structural rearrangement to generate the bicyclo[2.2.2]octane core, transforming preandiloid C into andiconin. FAD-binding monooxygenase andJ then produces andilesin D which is reduced by dehydrogenase andI to yield andilesin A. Action of acetyltransferase andG followed by a spontaneous acetate elimination leads then to andilesin B, which is in turn substrate of the short chain dehydrogenase andH to yield andilesin C. Finally, the dioxygenase andF catalyzes the transformation of andilesin C to anditomin. This Emericella variicolor (Aspergillus stellatus) protein is Dioxygenase andF.